The following is a 760-amino-acid chain: Xaa-Pro dipeptidyl-peptidase (760 aa).

Catalysis depends on charge relay system residues S349, D469, and H499.

It belongs to the peptidase S15 family. In terms of assembly, homodimer.

The protein resides in the cytoplasm. The enzyme catalyses Hydrolyzes Xaa-Pro-|- bonds to release unblocked, N-terminal dipeptides from substrates including Ala-Pro-|-p-nitroanilide and (sequentially) Tyr-Pro-|-Phe-Pro-|-Gly-Pro-|-Ile.. Removes N-terminal dipeptides sequentially from polypeptides having unsubstituted N-termini provided that the penultimate residue is proline. In Streptococcus pyogenes serotype M12 (strain MGAS9429), this protein is Xaa-Pro dipeptidyl-peptidase.